Reading from the N-terminus, the 172-residue chain is Putative F-box protein At3g13825 (172 aa).

In terms of domain architecture, F-box spans methionine 1–alanine 51.

The sequence is that of Putative F-box protein At3g13825 from Arabidopsis thaliana (Mouse-ear cress).